The sequence spans 229 residues: Heptaprenylglyceryl phosphate synthase (229 aa).

K12 provides a ligand contact to sn-glycerol 1-phosphate. Positions 14 and 40 each coordinate Mg(2+). Sn-glycerol 1-phosphate-binding positions include 159–164 (YLEYSG), G189, and 209–210 (GN).

It belongs to the GGGP/HepGP synthase family. Group I subfamily. As to quaternary structure, homodimer. Mg(2+) is required as a cofactor.

The enzyme catalyses sn-glycerol 1-phosphate + all-trans-heptaprenyl diphosphate = 3-heptaprenyl-sn-glycero-1-phosphate + diphosphate. It participates in membrane lipid metabolism; glycerophospholipid metabolism. Its function is as follows. Prenyltransferase that catalyzes in vivo the transfer of the heptaprenyl moiety of heptaprenyl pyrophosphate (HepPP; 35 carbon atoms) to the C3 hydroxyl of sn-glycerol-1-phosphate (G1P), producing heptaprenylglyceryl phosphate (HepGP). This reaction is an ether-bond-formation step in the biosynthesis of archaea-type G1P-based membrane lipids found in Bacillales. This is Heptaprenylglyceryl phosphate synthase from Bacillus cereus (strain ATCC 14579 / DSM 31 / CCUG 7414 / JCM 2152 / NBRC 15305 / NCIMB 9373 / NCTC 2599 / NRRL B-3711).